Here is a 165-residue protein sequence, read N- to C-terminus: MLGHLVGLVKVRVVRGVNLAVRDLRSSDPYVIVRMGKQKLKTRVIKKTTNPEWNDELTLSIEDPAVPVRLEVYDKDTFIDDAMGNAELDIRPLVEVVKMKIEGVADNTVVKKVVPNRQNCLAEESTIYISEGKVKQDVVLRLRDVECGEIELQLQWVDIPGSKGV.

Residues Met-1 to Ala-105 enclose the C2 domain. Residues Arg-22, Asp-23, Asp-28, Asp-74, Lys-75, Asp-76, and Asp-81 each contribute to the Ca(2+) site.

The protein belongs to the plant CAR protein family. As to quaternary structure, binds to PYR/PYL/RCAR abscisic acid intracellular receptors in an ABA-independent manner, both at the plasma membrane and in the nucleus. Binds phospholipids in a Ca(2+)-dependent manner. Interacts with YchF1.

The protein resides in the cell membrane. Its subcellular location is the nucleus. It is found in the cytoplasm. The protein localises to the cytosol. Functionally, mediates the transient calcium-dependent interaction of PYR/PYL/RCAR abscisic acid (ABA) receptors with the plasma membrane and thus regulates ABA sensitivity. Stimulates the GTPase/ATPase activities of YchF1, and regulates its subcellular localization. Promotes tolerance towards salinity stress by limiting the accumulation of reactive oxygen species (ROS). Promotes resistance to bacterial pathogens. In Oryza sativa subsp. indica (Rice), this protein is GTPase activating protein 1.